The sequence spans 163 residues: Large ribosomal subunit protein uL10 (163 aa).

The protein belongs to the universal ribosomal protein uL10 family. In terms of assembly, part of the ribosomal stalk of the 50S ribosomal subunit. The N-terminus interacts with L11 and the large rRNA to form the base of the stalk. The C-terminus forms an elongated spine to which L12 dimers bind in a sequential fashion forming a multimeric L10(L12)X complex.

Forms part of the ribosomal stalk, playing a central role in the interaction of the ribosome with GTP-bound translation factors. In Haemophilus influenzae (strain PittGG), this protein is Large ribosomal subunit protein uL10.